A 504-amino-acid chain; its full sequence is Protein anon-37Cs (504 aa).

As to expression, low levels seen in adult heads, thorax, abdomen and ovaries, high levels in testes.

It is found in the cytoplasm. Has a non-vital function. This is Protein anon-37Cs (anon-37Cs) from Drosophila melanogaster (Fruit fly).